Here is a 513-residue protein sequence, read N- to C-terminus: Palmitoyltransferase ZDHHC14 (513 aa).

Topologically, residues methionine 1–glutamine 59 are cytoplasmic. A helical transmembrane segment spans residues threonine 60–phenylalanine 80. Topologically, residues aspartate 81–asparagine 88 are lumenal. A helical transmembrane segment spans residues leucine 89–leucine 109. Residues arginine 110–arginine 207 lie on the Cytoplasmic side of the membrane. A DHHC domain is found at lysine 164–leucine 214. The active-site S-palmitoyl cysteine intermediate is the cysteine 194. The chain crosses the membrane as a helical span at residues phenylalanine 208–isoleucine 228. The Lumenal portion of the chain corresponds to threonine 229–threonine 266. The helical transmembrane segment at alanine 267–leucine 287 threads the bilayer. Residues serine 288 to valine 513 are Cytoplasmic-facing. Residues phenylalanine 348–asparagine 369 form a disordered region. Residues glutamine 355–asparagine 369 are compositionally biased toward polar residues.

The protein belongs to the DHHC palmitoyltransferase family. ERF2/ZDHHC9 subfamily.

The protein resides in the endoplasmic reticulum membrane. The protein localises to the golgi apparatus membrane. The enzyme catalyses L-cysteinyl-[protein] + hexadecanoyl-CoA = S-hexadecanoyl-L-cysteinyl-[protein] + CoA. Palmitoyltransferase that could catalyze the addition of palmitate onto various protein substrates. In Danio rerio (Zebrafish), this protein is Palmitoyltransferase ZDHHC14 (zdhhc14).